The sequence spans 271 residues: Ribosomal RNA small subunit methyltransferase A (271 aa).

S-adenosyl-L-methionine is bound by residues His-11, Leu-13, Gly-38, Glu-58, Asp-86, and Asn-101.

It belongs to the class I-like SAM-binding methyltransferase superfamily. rRNA adenine N(6)-methyltransferase family. RsmA subfamily.

The protein localises to the cytoplasm. It catalyses the reaction adenosine(1518)/adenosine(1519) in 16S rRNA + 4 S-adenosyl-L-methionine = N(6)-dimethyladenosine(1518)/N(6)-dimethyladenosine(1519) in 16S rRNA + 4 S-adenosyl-L-homocysteine + 4 H(+). Its function is as follows. Specifically dimethylates two adjacent adenosines (A1518 and A1519) in the loop of a conserved hairpin near the 3'-end of 16S rRNA in the 30S particle. May play a critical role in biogenesis of 30S subunits. The polypeptide is Ribosomal RNA small subunit methyltransferase A (Helicobacter pylori (strain ATCC 700392 / 26695) (Campylobacter pylori)).